Reading from the N-terminus, the 922-residue chain is Non-centrosomal microtubule array protein 1 (922 aa).

Residues 1–10 are compositionally biased toward polar residues; that stretch reads MSNERVSTGS. Disordered regions lie at residues 1 to 134, 250 to 277, 465 to 491, and 533 to 563; these read MSNE…HLPP, PVRL…TVPR, KSRH…QMNL, and TQKE…SNLS. Basic and acidic residues-rich tracts occupy residues 43–54 and 70–94; these read SMERKDMPDRPK and PKDR…KECA. Positions 99–113 are enriched in low complexity; it reads SNTSSEHSSRSNSST. Composition is skewed to basic and acidic residues over residues 256-276 and 468-484; these read RGDT…DTVP and HLSE…ERRG. The span at 539–563 shows a compositional bias: low complexity; it reads SHSTPSQSRHSSSKSSHFNGSSNLS. Residues 564–728 adopt a coiled-coil conformation; that stretch reads TSEQLRLQEM…RSVSTLRLEQ (165 aa).

It is found in the cytoplasm. It localises to the cytoskeleton. The protein localises to the apical cell membrane. Its subcellular location is the cell junction. The protein resides in the hemidesmosome. It is found in the adherens junction. Functionally, plays a role in the assembly of microtubule arrays in the germline acting redundantly with ptrn-1 to control circumferential microtubule assembly along the body which is necessary for larval development, viability, and morphology and integrity of the epidermis. Required for microtubule stability and anchorage by binding to microtubule minus ends. Recruited to hemidesomosomes in early embryonic elongation to direct the nucleation and growth of non-centrosomal microtubules. Its function is as follows. Required for normal nuclear migration in the embryonic epidermis. In terms of biological role, directs the assembly of non-centrosomal microtubule arrays that determine the position of nuclei within intracellular compartments in the epidermis and this is independent of ptrn-1 activity. The chain is Non-centrosomal microtubule array protein 1 from Caenorhabditis elegans.